Here is a 370-residue protein sequence, read N- to C-terminus: DNA polymerase IV (370 aa).

The UmuC domain maps to 14–198; sequence IIHIDMDAFF…LPIEKFYGVG (185 aa). The Mg(2+) site is built by Asp-18 and Asp-116. The active site involves Glu-117.

Belongs to the DNA polymerase type-Y family. As to quaternary structure, monomer. Mg(2+) serves as cofactor.

It is found in the cytoplasm. The enzyme catalyses DNA(n) + a 2'-deoxyribonucleoside 5'-triphosphate = DNA(n+1) + diphosphate. In terms of biological role, poorly processive, error-prone DNA polymerase involved in untargeted mutagenesis. Copies undamaged DNA at stalled replication forks, which arise in vivo from mismatched or misaligned primer ends. These misaligned primers can be extended by PolIV. Exhibits no 3'-5' exonuclease (proofreading) activity. May be involved in translesional synthesis, in conjunction with the beta clamp from PolIII. The polypeptide is DNA polymerase IV (Streptococcus mutans serotype c (strain ATCC 700610 / UA159)).